A 1048-amino-acid chain; its full sequence is Probable beta-glucosidase E (1048 aa).

A disordered region spans residues 1–54; it reads MPPPPFRDAPSSAKSSQRYTPLHESIPEELNDKQYSSDADSLPLSDPSDGEDDS. Residues 1–150 are Cytoplasmic-facing; sequence MPPPPFRDAP…WRTVYYSKYW (150 aa). The segment covering 36–47 has biased composition (low complexity); the sequence is SSDADSLPLSDP. Residues 151-171 traverse the membrane as a helical; Signal-anchor for type II membrane protein segment; the sequence is WRALIGVVVVLVLLVLVFLGL. Residues 172 to 1048 are Extracellular-facing; that stretch reads ARSKQVGDEL…SRDLPLHGKY (877 aa). Asn216, Asn224, and Asn410 each carry an N-linked (GlcNAc...) asparagine glycan. Asp438 is a catalytic residue. N-linked (GlcNAc...) asparagine glycosylation is found at Asn481, Asn520, Asn578, Asn895, and Asn991. The segment at 508–527 is disordered; that stretch reads WERPPPDGEGGPNFSSWTDD.

The protein belongs to the glycosyl hydrolase 3 family.

It localises to the cell membrane. The catalysed reaction is Hydrolysis of terminal, non-reducing beta-D-glucosyl residues with release of beta-D-glucose.. It functions in the pathway glycan metabolism; cellulose degradation. Functionally, beta-glucosidases are one of a number of cellulolytic enzymes involved in the degradation of cellulosic biomass. Catalyzes the last step releasing glucose from the inhibitory cellobiose. In Aspergillus oryzae (strain ATCC 42149 / RIB 40) (Yellow koji mold), this protein is Probable beta-glucosidase E (bglE).